A 418-amino-acid polypeptide reads, in one-letter code: Serine hydroxymethyltransferase (418 aa).

Residues leucine 121 and 125–127 contribute to the (6S)-5,6,7,8-tetrahydrofolate site; that span reads GHL. Lysine 230 is subject to N6-(pyridoxal phosphate)lysine. 356 to 358 is a binding site for (6S)-5,6,7,8-tetrahydrofolate; sequence SPF.

This sequence belongs to the SHMT family. In terms of assembly, homodimer. It depends on pyridoxal 5'-phosphate as a cofactor.

The protein resides in the cytoplasm. The catalysed reaction is (6R)-5,10-methylene-5,6,7,8-tetrahydrofolate + glycine + H2O = (6S)-5,6,7,8-tetrahydrofolate + L-serine. It functions in the pathway one-carbon metabolism; tetrahydrofolate interconversion. The protein operates within amino-acid biosynthesis; glycine biosynthesis; glycine from L-serine: step 1/1. Functionally, catalyzes the reversible interconversion of serine and glycine with tetrahydrofolate (THF) serving as the one-carbon carrier. This reaction serves as the major source of one-carbon groups required for the biosynthesis of purines, thymidylate, methionine, and other important biomolecules. Also exhibits THF-independent aldolase activity toward beta-hydroxyamino acids, producing glycine and aldehydes, via a retro-aldol mechanism. The protein is Serine hydroxymethyltransferase of Shewanella sediminis (strain HAW-EB3).